The chain runs to 264 residues: MSDILQTILARKAEEVAQRRAQRPLEDLQVAVASAPPVRGFVRALQAAVANGDPAVIAEVKKASPSKGVIRPDFRPADIAVSYEFGGASCLSVLTDVDFFQGADAYLQQARDACTLPVLRKDFVIDAYQVYEARVLGADCILLIVAALDDTQLATLSELAMSLGMDVLVEVHDIDELERALQVPAPMIGINNRNLRTFEVSLQTTLDMQKAVPRDRLLVTESGILGPQDVALMRDAGIHSFLVGEAFMRVEEPGEGLRQLFFAA.

It belongs to the TrpC family.

It carries out the reaction 1-(2-carboxyphenylamino)-1-deoxy-D-ribulose 5-phosphate + H(+) = (1S,2R)-1-C-(indol-3-yl)glycerol 3-phosphate + CO2 + H2O. It functions in the pathway amino-acid biosynthesis; L-tryptophan biosynthesis; L-tryptophan from chorismate: step 4/5. The polypeptide is Indole-3-glycerol phosphate synthase (Stenotrophomonas maltophilia (strain R551-3)).